The chain runs to 175 residues: uncharacterized protein (175 aa).

An HTH marR-type domain is found at 10 to 157 (LFELYAELIH…AERLFRDLVT (148 aa)). Residues 68-91 (VTSIAEKMNTTKATVSRISTKLLG) constitute a DNA-binding region (H-T-H motif).

It is found in the cytoplasm. This is an uncharacterized protein from Bacillus subtilis (strain 168).